We begin with the raw amino-acid sequence, 286 residues long: Bifunctional protein FolD (286 aa).

Residues 164-166, Ser-193, and Ile-234 contribute to the NADP(+) site; that span reads GRS.

This sequence belongs to the tetrahydrofolate dehydrogenase/cyclohydrolase family. Homodimer.

The enzyme catalyses (6R)-5,10-methylene-5,6,7,8-tetrahydrofolate + NADP(+) = (6R)-5,10-methenyltetrahydrofolate + NADPH. It catalyses the reaction (6R)-5,10-methenyltetrahydrofolate + H2O = (6R)-10-formyltetrahydrofolate + H(+). The protein operates within one-carbon metabolism; tetrahydrofolate interconversion. Functionally, catalyzes the oxidation of 5,10-methylenetetrahydrofolate to 5,10-methenyltetrahydrofolate and then the hydrolysis of 5,10-methenyltetrahydrofolate to 10-formyltetrahydrofolate. This is Bifunctional protein FolD from Nitratidesulfovibrio vulgaris (strain ATCC 29579 / DSM 644 / CCUG 34227 / NCIMB 8303 / VKM B-1760 / Hildenborough) (Desulfovibrio vulgaris).